Reading from the N-terminus, the 436-residue chain is Histone acetyltransferase RTT109 (436 aa).

Positions 2–404 constitute a Rtt109-type HAT domain; it reads SLNDFLSSVL…LQSLTGKREH (403 aa). Acetyl-CoA contacts are provided by residues 88–90 and 97–101; these read ADT and RVSVR. Residues 128 to 170 are interaction with VPS75; the sequence is RSYKKISPELISAASTPARTLRILARRLKQSGSTVLKEIESPR. Residues F192, A196, 211–213, and W221 contribute to the acetyl-CoA site; that span reads HIL. D288 serves as the catalytic Proton donor/acceptor. K290 carries the post-translational modification N6-acetyllysine; by autocatalysis. An interaction with ASF1 region spans residues 419 to 433; the sequence is LAITMLKPRKKAKAL.

This sequence belongs to the RTT109 family. In terms of assembly, forms a complex composed of two RTT109 subunits and one VPS75 homodimer; each RTT109 subunit interacts predominantly with VPS75 instead of interacting with the other RTT109 subunit. Interacts with VPS75; the interaction is direct. Interacts (via C-terminus) with ASF1; the interaction is direct. Interacts with histone H3/H4 heterodimers via histone H3.

Its subcellular location is the nucleus. The catalysed reaction is L-lysyl-[histone] + acetyl-CoA = N(6)-acetyl-L-lysyl-[histone] + CoA + H(+). The enzyme catalyses L-lysyl-[protein] + acetyl-CoA = N(6)-acetyl-L-lysyl-[protein] + CoA + H(+). Its function is as follows. Histone chaperone-dependent acetylase that modifies 'Lys-9', 'Lys-14', 'Lys-23', 'Lys-27', and 'Lys-56' on histone H3 (H3K9Ac, H3K14Ac and H3K23Ac, H3K27Ac, and H3K56Ac) to promote nucleosome assembly, genomic stability, DNA repair and transcriptional regulation during mitotic S-phase. Its residue selectivity is influenced by the acetylation status of histone H3, and also the presence of histone chaperone ASF1 that shifts selectivity to 'Lys-56' when H3K14Ac is already present. H3K56 acetylation weakens the interaction between the histone core and the surrounding DNA in the nucleosomal particle and drives chromatin disassembly. Autoacetylates. Independently of acetyltransferase activity, stimulates histone deposition by VPS75. Involved in regulation of Ty1 transposition. The protein is Histone acetyltransferase RTT109 of Saccharomyces cerevisiae (strain ATCC 204508 / S288c) (Baker's yeast).